The chain runs to 362 residues: MDPNSTVSGDGQATAAIEHRSFARIGFLGNPSDVYFGRTISLTIGNFWASVKLEPSEHLVIKPHPFHDLVQFTSLDHLLNRLQNEGYYGGVRLLMAICKVFRNYCKENDIQLHQANFSLSYDTNIPRQTGLSGSSAIVSAALNCLLDFYNVRHLIKVQVRPNIVLSAEKELGIVAGLQDRVAQVYGGLVHMDFSKEHMDKLGHGIYTPMDISLLPPLHLIYAENPSDSGKVHSMVRQRWLDGDEFIISSMKEVGSLAEEGRTALLNKDHSKLVELMNLNFDIRRRMFGDECLGAMNIEMVEVARRVGAASKFTGSGGAVVVFCPEGPSQVKLLEEECRKAGFTLQPVKIAPSCLNDSDIQTL.

Position 126–136 (126–136 (PRQTGLSGSSA)) interacts with ATP. Asp-179 acts as the Proton acceptor in catalysis.

Belongs to the GHMP kinase family. Requires Mg(2+) as cofactor. The cofactor is Mn(2+). Co(2+) is required as a cofactor. Highly expressed in pollen. Detected in seedlings, inflorescences, seeds, leaves and roots.

The enzyme catalyses D-glucuronate + ATP = 1-phospho-alpha-D-glucuronate + ADP + H(+). In terms of biological role, sugar-1-kinase with a strict substrate specificity for D-glucuronic acid and ATP. Involved in the biosynthesis of UDP-glucuronic acid (UDP-GlcA), providing nucleotide sugars for cell-wall polymers. May be also involved in a salvage pathway for glucuronic acid. In Arabidopsis thaliana (Mouse-ear cress), this protein is Glucuronokinase 1 (GLCAK1).